The sequence spans 231 residues: LexA repressor (231 aa).

Residues 28–48 (IREIGEALDIRSTNGVNDHLK) constitute a DNA-binding region (H-T-H motif). Catalysis depends on for autocatalytic cleavage activity residues Ser149 and Lys186.

Belongs to the peptidase S24 family. Homodimer.

The enzyme catalyses Hydrolysis of Ala-|-Gly bond in repressor LexA.. Its function is as follows. Represses a number of genes involved in the response to DNA damage (SOS response), including recA and lexA. In the presence of single-stranded DNA, RecA interacts with LexA causing an autocatalytic cleavage which disrupts the DNA-binding part of LexA, leading to derepression of the SOS regulon and eventually DNA repair. This Anaeromyxobacter sp. (strain Fw109-5) protein is LexA repressor.